A 143-amino-acid chain; its full sequence is Large ribosomal subunit protein uL15 (143 aa).

A disordered region spans residues 1 to 58; the sequence is MQLNDLRSAPGARREKHRPGRGIGSGLGKTGGRGHKGQTSRSGGSIAPGFEGGQQPLH. Positions 21–31 are enriched in gly residues; it reads RGIGSGLGKTG.

It belongs to the universal ribosomal protein uL15 family. Part of the 50S ribosomal subunit.

In terms of biological role, binds to the 23S rRNA. The polypeptide is Large ribosomal subunit protein uL15 (Ectopseudomonas mendocina (strain ymp) (Pseudomonas mendocina)).